The following is a 590-amino-acid chain: L-asparaginase (590 aa).

The 352-residue stretch at 6–357 folds into the Asparaginase/glutaminase domain; the sequence is AHVLVLYTGG…VEKKAMMVKN (352 aa). T16 (O-isoaspartyl threonine intermediate) is an active-site residue. Residues 44–351 are asparaginase; that stretch reads NDDDYVSTYY…KDCWELVEKK (308 aa). Residues 85-87 and 117-118 contribute to the substrate site; these read DSS and TD. ANK repeat units follow at residues 398-427, 431-460, 497-526, and 530-559; these read IFPQ…DLSV, NGRN…SFHL, RLGV…DINQ, and NGET…DPYK.

The protein in the N-terminal section; belongs to the asparaginase 1 family. As to expression, may be present in the larval cuticle.

The enzyme catalyses L-asparagine + H2O = L-aspartate + NH4(+). This chain is L-asparaginase, found in Dirofilaria immitis (Canine heartworm).